A 160-amino-acid chain; its full sequence is MIELDLQCASTGAAPAAADLQRWCELALRQRSGDSELTIRLVDEEEGRELNRTWRQKDYATNVLSFPADVPDEFLDIPLLGDLVICVPVVEREAAEQGKTLDAHWAHLVIHGCLHLLGYDHIEDAEAEEMEALERQLLAELGHPDPYAEDSPETGICKDS.

Residues His111, His115, and His121 each coordinate Zn(2+).

The protein belongs to the endoribonuclease YbeY family. Zn(2+) is required as a cofactor.

It localises to the cytoplasm. Functionally, single strand-specific metallo-endoribonuclease involved in late-stage 70S ribosome quality control and in maturation of the 3' terminus of the 16S rRNA. The protein is Endoribonuclease YbeY of Stutzerimonas stutzeri (strain A1501) (Pseudomonas stutzeri).